Reading from the N-terminus, the 71-residue chain is Sec-independent protein translocase protein TatA (71 aa).

Residues 9-29 form a helical membrane-spanning segment; the sequence is LLLILAIVVILFGASRLPALG. The segment at 43 to 71 is disordered; that stretch reads FGGEDEKPTASGNGSTPTQSSSDQGSKQA. Over residues 52–71 the composition is skewed to polar residues; the sequence is ASGNGSTPTQSSSDQGSKQA.

Belongs to the TatA/E family. In terms of assembly, the Tat system comprises two distinct complexes: a TatABC complex, containing multiple copies of TatA, TatB and TatC subunits, and a separate TatA complex, containing only TatA subunits. Substrates initially bind to the TatABC complex, which probably triggers association of the separate TatA complex to form the active translocon.

The protein localises to the cell inner membrane. Its function is as follows. Part of the twin-arginine translocation (Tat) system that transports large folded proteins containing a characteristic twin-arginine motif in their signal peptide across membranes. TatA could form the protein-conducting channel of the Tat system. The chain is Sec-independent protein translocase protein TatA from Anaeromyxobacter dehalogenans (strain 2CP-C).